The chain runs to 762 residues: Proline-rich receptor-like protein kinase PERK10 (762 aa).

The interval 1 to 322 is disordered; that stretch reads MTTPAQAPRE…PTPVTDNSSS (322 aa). At 1 to 328 the chain is on the extracellular side; it reads MTTPAQAPRE…NSSSSGISIA (328 aa). Residues 13–23 show a composition bias toward low complexity; it reads SLSPSLASPPL. Asparagine 37 is a glycosylation site (N-linked (GlcNAc...) asparagine). Low complexity predominate over residues 41-57; it reads PTREPTNGNPPETTNTP. Composition is skewed to pro residues over residues 60–210, 231–246, and 254–275; these read SSPP…PSTP, PPPPGSKRPTPSPPSP, and HPSPPSPPEETLPPPKPSPDPL. Residues 276–305 are compositionally biased toward low complexity; it reads PSNSSSPPTLLPPSSVVSPPSPPRKSVSGP. Asparagine 278 and asparagine 319 each carry an N-linked (GlcNAc...) asparagine glycan. The chain crosses the membrane as a helical span at residues 329–349; the sequence is AVVGVSIGVALVLLTLIGVVV. Residues 350–762 lie on the Cytoplasmic side of the membrane; that stretch reads CCLKKRKKRL…NSYISKDENL (413 aa). The disordered stretch occupies residues 370-410; sequence TPMESSSPRSDSALLKTQSSAPLVGNRSSNRTYLSQSEPGG. Positions 372 to 407 are enriched in polar residues; that stretch reads MESSSPRSDSALLKTQSSAPLVGNRSSNRTYLSQSE. The Protein kinase domain maps to 430-706; the sequence is FSDENLLGEG…SQIVRAFDSL (277 aa). ATP contacts are provided by residues 436 to 444 and lysine 458; that span reads LGEGGFGRV. Residue aspartate 554 is the Proton acceptor of the active site.

This sequence belongs to the protein kinase superfamily. Ser/Thr protein kinase family. As to quaternary structure, interacts with KIPK1 and KIPK2 (via its cytosolic domain). Mostly expressed in inflorescence bolts and flower buds, and, to a lower extent, in roots, seedlings, leaves and siliques.

The protein resides in the cell membrane. The catalysed reaction is L-seryl-[protein] + ATP = O-phospho-L-seryl-[protein] + ADP + H(+). It catalyses the reaction L-threonyl-[protein] + ATP = O-phospho-L-threonyl-[protein] + ADP + H(+). Its function is as follows. Could be involved in the negative regulation of root growth. In Arabidopsis thaliana (Mouse-ear cress), this protein is Proline-rich receptor-like protein kinase PERK10 (PERK10).